Reading from the N-terminus, the 318-residue chain is Pantothenate kinase (318 aa).

96–103 (GSVSVGKS) is an ATP binding site.

This sequence belongs to the prokaryotic pantothenate kinase family.

The protein resides in the cytoplasm. The enzyme catalyses (R)-pantothenate + ATP = (R)-4'-phosphopantothenate + ADP + H(+). The protein operates within cofactor biosynthesis; coenzyme A biosynthesis; CoA from (R)-pantothenate: step 1/5. This Bradyrhizobium sp. (strain BTAi1 / ATCC BAA-1182) protein is Pantothenate kinase.